Reading from the N-terminus, the 601-residue chain is Putative purine permease C1399.01c (601 aa).

12 helical membrane-spanning segments follow: residues 64 to 84 (VPVL…VGGV), 102 to 122 (TNYL…IQIA), 131 to 151 (YYIG…VSVA), 179 to 199 (YGAF…MSFI), 207 to 227 (LFPP…LISS), 264 to 284 (GWGS…IIII), 294 to 314 (TTSV…TGYW), 337 to 357 (IYGP…MEAI), 424 to 444 (FFCA…AVFV), 450 to 470 (VLGG…IAII), 481 to 501 (FILT…DWFT), and 522 to 542 (LVME…NLIL).

Belongs to the nucleobase:cation symporter-2 (NCS2) (TC 2.A.40) family.

It is found in the vacuole membrane. The polypeptide is Putative purine permease C1399.01c (Schizosaccharomyces pombe (strain 972 / ATCC 24843) (Fission yeast)).